Here is a 250-residue protein sequence, read N- to C-terminus: 26 kDa periplasmic immunogenic protein (250 aa).

The first 28 residues, 1–28 (MNTRASNFLAASFSTIMLVGAFSLPAFA), serve as a signal peptide directing secretion.

Its subcellular location is the periplasm. This is 26 kDa periplasmic immunogenic protein (bp26) from Brucella melitensis biotype 1 (strain ATCC 23456 / CCUG 17765 / NCTC 10094 / 16M).